Here is a 397-residue protein sequence, read N- to C-terminus: Elongation factor Tu (397 aa).

Residues 10–206 (KPHVNIGTIG…AVDQNIPEPQ (197 aa)) form the tr-type G domain. The interval 19-26 (GHIDHGKT) is G1. 19–26 (GHIDHGKT) is a binding site for GTP. T26 serves as a coordination point for Mg(2+). Residues 62-66 (GITIS) are G2. Residues 83-86 (DCPG) form a G3 region. GTP-binding positions include 83 to 87 (DCPGH) and 138 to 141 (NKSD). Residues 138–141 (NKSD) form a G4 region. The tract at residues 176 to 178 (SAL) is G5.

Belongs to the TRAFAC class translation factor GTPase superfamily. Classic translation factor GTPase family. EF-Tu/EF-1A subfamily. As to quaternary structure, monomer.

The protein localises to the cytoplasm. It catalyses the reaction GTP + H2O = GDP + phosphate + H(+). Its function is as follows. GTP hydrolase that promotes the GTP-dependent binding of aminoacyl-tRNA to the A-site of ribosomes during protein biosynthesis. This Thermobifida fusca (strain YX) protein is Elongation factor Tu.